We begin with the raw amino-acid sequence, 552 residues long: Chaperonin GroEL (552 aa).

Residues 29–32 (TAGP), lysine 50, 86–90 (DGTTT), glycine 417, and aspartate 499 each bind ATP.

This sequence belongs to the chaperonin (HSP60) family. Forms a cylinder of 14 subunits composed of two heptameric rings stacked back-to-back. Interacts with the co-chaperonin GroES.

It is found in the cytoplasm. The enzyme catalyses ATP + H2O + a folded polypeptide = ADP + phosphate + an unfolded polypeptide.. Functionally, together with its co-chaperonin GroES, plays an essential role in assisting protein folding. The GroEL-GroES system forms a nano-cage that allows encapsulation of the non-native substrate proteins and provides a physical environment optimized to promote and accelerate protein folding. The chain is Chaperonin GroEL from Ehrlichia canis (strain Jake).